A 139-amino-acid chain; its full sequence is Phosphoribosyl-AMP cyclohydrolase (139 aa).

Aspartate 91 contacts Mg(2+). Cysteine 92 is a Zn(2+) binding site. 2 residues coordinate Mg(2+): aspartate 93 and aspartate 95. Zn(2+) is bound by residues cysteine 110 and cysteine 117.

This sequence belongs to the PRA-CH family. Homodimer. It depends on Mg(2+) as a cofactor. Zn(2+) serves as cofactor.

The protein localises to the cytoplasm. The enzyme catalyses 1-(5-phospho-beta-D-ribosyl)-5'-AMP + H2O = 1-(5-phospho-beta-D-ribosyl)-5-[(5-phospho-beta-D-ribosylamino)methylideneamino]imidazole-4-carboxamide. It participates in amino-acid biosynthesis; L-histidine biosynthesis; L-histidine from 5-phospho-alpha-D-ribose 1-diphosphate: step 3/9. In terms of biological role, catalyzes the hydrolysis of the adenine ring of phosphoribosyl-AMP. The polypeptide is Phosphoribosyl-AMP cyclohydrolase (Brucella canis (strain ATCC 23365 / NCTC 10854 / RM-666)).